The sequence spans 209 residues: Protein-L-isoaspartate O-methyltransferase (209 aa).

Serine 60 is a catalytic residue.

The protein belongs to the methyltransferase superfamily. L-isoaspartyl/D-aspartyl protein methyltransferase family.

It is found in the cytoplasm. It catalyses the reaction [protein]-L-isoaspartate + S-adenosyl-L-methionine = [protein]-L-isoaspartate alpha-methyl ester + S-adenosyl-L-homocysteine. Functionally, catalyzes the methyl esterification of L-isoaspartyl residues in peptides and proteins that result from spontaneous decomposition of normal L-aspartyl and L-asparaginyl residues. It plays a role in the repair and/or degradation of damaged proteins. The sequence is that of Protein-L-isoaspartate O-methyltransferase from Photobacterium profundum (strain SS9).